A 259-amino-acid polypeptide reads, in one-letter code: Isoprenyl transferase (259 aa).

Asp-33 is a catalytic residue. Asp-33 serves as a coordination point for Mg(2+). Residues Gly-34–Arg-37, Trp-38, His-51, and Ser-79–Glu-81 contribute to the substrate site. The active-site Proton acceptor is Asn-82. Substrate is bound by residues Arg-86, Arg-208, and Arg-214–Ser-216. Glu-227 provides a ligand contact to Mg(2+).

It belongs to the UPP synthase family. As to quaternary structure, homodimer. The cofactor is Mg(2+).

Its function is as follows. Catalyzes the condensation of isopentenyl diphosphate (IPP) with allylic pyrophosphates generating different type of terpenoids. This Streptomyces fradiae (Streptomyces roseoflavus) protein is Isoprenyl transferase.